A 131-amino-acid chain; its full sequence is Large ribosomal subunit protein bL17 (131 aa).

It belongs to the bacterial ribosomal protein bL17 family. Part of the 50S ribosomal subunit. Contacts protein L32.

The polypeptide is Large ribosomal subunit protein bL17 (Shewanella violacea (strain JCM 10179 / CIP 106290 / LMG 19151 / DSS12)).